The following is a 157-amino-acid chain: Putative pre-16S rRNA nuclease (157 aa).

Belongs to the YqgF nuclease family.

It localises to the cytoplasm. Its function is as follows. Could be a nuclease involved in processing of the 5'-end of pre-16S rRNA. This Orientia tsutsugamushi (strain Ikeda) (Rickettsia tsutsugamushi) protein is Putative pre-16S rRNA nuclease.